The chain runs to 104 residues: Secreted RxLR effector protein 54 (104 aa).

An N-terminal signal peptide occupies residues 1–19; that stretch reads MIFTLLGLALVATKSACIA. A RxLR motif is present at residues 52-55; sequence RSLR. N-linked (GlcNAc...) asparagine glycosylation occurs at Asn64.

It belongs to the RxLR effector family.

Its subcellular location is the secreted. It localises to the host chloroplast envelope. It is found in the host mitochondrion. The protein resides in the host nucleus. The protein localises to the host cytoplasm. Functionally, secreted effector that completely suppresses the host cell death induced by cell death-inducing proteins. The protein is Secreted RxLR effector protein 54 of Plasmopara viticola (Downy mildew of grapevine).